Here is a 198-residue protein sequence, read N- to C-terminus: Protein XA-1 (198 aa).

Residues 1–18 (MFFYVLLLALMAQGWSLP) form the signal peptide. The interval 17–198 (LPQGKTGEDS…KHGQEQGKKH (182 aa)) is disordered. Over residues 29–44 (FRPPSPPMGPSLPPPV) the composition is skewed to pro residues. Over residues 46–59 (HDLHRPSGHPEEFR) the composition is skewed to basic and acidic residues. Residues 76–86 (GRPKRDLHHGK) are compositionally biased toward basic residues. Basic and acidic residues predominate over residues 95–104 (HTGEVLHHTD). The segment covering 134 to 145 (HGRHRRDLHHGK) has biased composition (basic residues). Positions 181–198 (NSSEEKRPKHGQEQGKKH) are enriched in basic and acidic residues.

In terms of tissue distribution, expressed in the periphery of the cement gland as well as in the region of the hatching gland.

The protein resides in the secreted. The sequence is that of Protein XA-1 from Xenopus laevis (African clawed frog).